The chain runs to 207 residues: Thymidylate kinase (207 aa).

An ATP-binding site is contributed by 7-14; that stretch reads GPEGAGKS.

This sequence belongs to the thymidylate kinase family.

It carries out the reaction dTMP + ATP = dTDP + ADP. In terms of biological role, phosphorylation of dTMP to form dTDP in both de novo and salvage pathways of dTTP synthesis. The polypeptide is Thymidylate kinase (Pseudomonas putida (strain W619)).